We begin with the raw amino-acid sequence, 197 residues long: Peptidyl-tRNA hydrolase (197 aa).

A tRNA-binding site is contributed by Tyr17. His22 acts as the Proton acceptor in catalysis. TRNA is bound by residues Phe68, Asn70, and Asn116.

The protein belongs to the PTH family. As to quaternary structure, monomer.

It is found in the cytoplasm. It catalyses the reaction an N-acyl-L-alpha-aminoacyl-tRNA + H2O = an N-acyl-L-amino acid + a tRNA + H(+). Hydrolyzes ribosome-free peptidyl-tRNAs (with 1 or more amino acids incorporated), which drop off the ribosome during protein synthesis, or as a result of ribosome stalling. Functionally, catalyzes the release of premature peptidyl moieties from peptidyl-tRNA molecules trapped in stalled 50S ribosomal subunits, and thus maintains levels of free tRNAs and 50S ribosomes. This chain is Peptidyl-tRNA hydrolase, found in Yersinia enterocolitica serotype O:8 / biotype 1B (strain NCTC 13174 / 8081).